The following is a 363-amino-acid chain: Putative type I specificity subunit S.MpnORF507P (363 aa).

It belongs to the type-I restriction system S methylase family. As to quaternary structure, the methyltransferase is composed of M and S polypeptides.

Its function is as follows. The specificity (S) subunit of a type I methyltransferase (MTase); this subunit dictates DNA sequence specificity. The single R subunit has multiple frameshifts and is probably not expressed. In Mycoplasma pneumoniae (strain ATCC 29342 / M129 / Subtype 1) (Mycoplasmoides pneumoniae), this protein is Putative type I specificity subunit S.MpnORF507P.